Reading from the N-terminus, the 25-residue chain is Ocellatin-1 (25 aa).

Residue valine 25 is modified to Valine amide.

In terms of tissue distribution, expressed by the skin dorsal glands.

It is found in the secreted. In terms of biological role, has hemolytic activity against human erythrocytes and antibacterial activity against the Gram-negative bacterium E.coli. This is Ocellatin-1 from Leptodactylus ocellatus (Argus frog).